We begin with the raw amino-acid sequence, 347 residues long: Ornithine transcarbamylase, mitochondrial (347 aa).

The transit peptide at 1–25 directs the protein to the mitochondrion; it reads MINSISNTVLLKSVVSKRFFSSSAK. Carbamoyl phosphate-binding positions include 84-87, Arg-135, His-162, and Gln-165; that span reads STRT. L-ornithine-binding residues include Asn-194, Asp-258, Ser-262, and Met-263. Residue Cys-300 is the Proton acceptor of the active site. Residues 300 to 301 and Arg-328 contribute to the carbamoyl phosphate site; that span reads CL.

The protein belongs to the aspartate/ornithine carbamoyltransferase superfamily. OTCase family.

It localises to the mitochondrion matrix. The enzyme catalyses carbamoyl phosphate + L-ornithine = L-citrulline + phosphate + H(+). The protein operates within amino-acid biosynthesis; L-arginine biosynthesis; L-arginine from L-ornithine and carbamoyl phosphate: step 1/3. The chain is Ornithine transcarbamylase, mitochondrial (OTC) from Pachysolen tannophilus (Yeast).